We begin with the raw amino-acid sequence, 204 residues long: High frequency lysogenization protein HflD homolog (204 aa).

Belongs to the HflD family.

The protein resides in the cytoplasm. It is found in the cell inner membrane. This Xanthomonas campestris pv. campestris (strain ATCC 33913 / DSM 3586 / NCPPB 528 / LMG 568 / P 25) protein is High frequency lysogenization protein HflD homolog.